A 318-amino-acid chain; its full sequence is Xanthocillin biosynthesis cluster transcription factor xanC (318 aa).

Positions 1–27 are enriched in basic and acidic residues; it reads MHSQTTKDEQSKDDSSNEKQDAIERRR. A disordered region spans residues 1–39; sequence MHSQTTKDEQSKDDSSNEKQDAIERRRLQNRLSQRNHRR. The 33-residue stretch at 20 to 52 folds into the bZIP domain; the sequence is QDAIERRRLQNRLSQRNHRRKIRDRIAKLQERV. The interval 25 to 40 is basic motif; sequence RRRLQNRLSQRNHRRK. The interval 41-48 is leucine-zipper; that stretch reads IRDRIAKL. Disordered regions lie at residues 71–107, 123–171, and 269–318; these read PPAA…QRNV, PSSS…FSLD, and GRHC…SMML. Low complexity-rich tracts occupy residues 123–139 and 147–171; these read PSSS…PFDL and STNS…FSLD. Residues 293–318 show a composition bias toward polar residues; that stretch reads APSSTPFCPLHPSQSSSLDNYQSMML.

Belongs to the bZIP family.

It is found in the nucleus. In terms of biological role, transcription regulator that specifically up-regulates the gene cluster that mediates the biosynthesis of the isocyanide xanthocillin and its derivatives. The sequence is that of Xanthocillin biosynthesis cluster transcription factor xanC from Aspergillus fumigatus (strain ATCC MYA-4609 / CBS 101355 / FGSC A1100 / Af293) (Neosartorya fumigata).